The following is a 293-amino-acid chain: Zinc metalloproteinase nas-2 (293 aa).

The first 17 residues, 1 to 17 (MIFPLLLTLILPNFVAP), serve as a signal peptide directing secretion. Positions 18-67 (KVLEPEKDDEIAVSTQREKTFFDMKLILTKLPTFEPSKYGHINIPLRKKR) are excised as a propeptide. The 194-residue stretch at 67–260 (RGIALHPLQW…ININTFYKCK (194 aa)) folds into the Peptidase M12A domain. A glycan (N-linked (GlcNAc...) asparagine) is linked at asparagine 111. 2 cysteine pairs are disulfide-bonded: cysteine 114–cysteine 259 and cysteine 139–cysteine 169. Histidine 180 is a Zn(2+) binding site. The active site involves glutamate 181. Histidine 184 and histidine 190 together coordinate Zn(2+). Asparagine 287 carries an N-linked (GlcNAc...) asparagine glycan.

It depends on Zn(2+) as a cofactor.

It is found in the secreted. Its function is as follows. Metalloprotease. This Caenorhabditis elegans protein is Zinc metalloproteinase nas-2 (nas-2).